The sequence spans 1175 residues: DNA-directed RNA polymerase subunit beta (1175 aa).

Residues 1142–1175 (PMELSGSDDDEFDQAGASLGINLSRDERSDADIA) form a disordered region. Basic and acidic residues predominate over residues 1165–1175 (SRDERSDADIA).

This sequence belongs to the RNA polymerase beta chain family. The RNAP catalytic core consists of 2 alpha, 1 beta, 1 beta' and 1 omega subunit. When a sigma factor is associated with the core the holoenzyme is formed, which can initiate transcription.

It catalyses the reaction RNA(n) + a ribonucleoside 5'-triphosphate = RNA(n+1) + diphosphate. DNA-dependent RNA polymerase catalyzes the transcription of DNA into RNA using the four ribonucleoside triphosphates as substrates. This Corynebacterium diphtheriae (strain ATCC 700971 / NCTC 13129 / Biotype gravis) protein is DNA-directed RNA polymerase subunit beta.